A 102-amino-acid polypeptide reads, in one-letter code: Small ribosomal subunit protein uS10 (102 aa).

Belongs to the universal ribosomal protein uS10 family. Part of the 30S ribosomal subunit.

Its function is as follows. Involved in the binding of tRNA to the ribosomes. The protein is Small ribosomal subunit protein uS10 of Acidithiobacillus ferrooxidans (strain ATCC 53993 / BNL-5-31) (Leptospirillum ferrooxidans (ATCC 53993)).